Consider the following 384-residue polypeptide: MSPTYDVIVIGLGGMGSAAAHHLSARGARVLGLEKFGPVHNRGSSHGGSRITRQSYFEDPAYVPLLLRSYELYEEVERSTGREVATLSGGVMVGRPDSLTVAGSLRSATQWDLPHEMLDAKEIRRRFPTLNPSNDEVALYEKKAGLVRPENMVAAHLQLATRQGAELHFEEPMTRWEPYRDGVRVHTAENTYTAGQLVICPGAWAPQLLTDLGVPFTIERQVMYWFQPRHGVGPFRPENHPIYIWEDAEGVQVYGFPSIDGPDLGAKVAFFRKGVVCTPETIDRTVHDHEVQAMADHMSRCIPDLPGTFLKAATCMYSNTPDEHFVIARHPAHPDSVTVACGFSGHGFKFVPVVGEIVADLALTGTTAHPIGLFDPRRLAAAPA.

Residue D6 to F36 coordinates FAD. C315 carries the post-translational modification S-8alpha-FAD cysteine.

This sequence belongs to the MSOX/MTOX family. MSOX subfamily. Monomer. Requires FAD as cofactor.

It localises to the cytoplasm. The enzyme catalyses sarcosine + O2 + H2O = formaldehyde + glycine + H2O2. Its function is as follows. Catalyzes the oxidative demethylation of sarcosine. This chain is Monomeric sarcosine oxidase, found in Streptomyces avermitilis (strain ATCC 31267 / DSM 46492 / JCM 5070 / NBRC 14893 / NCIMB 12804 / NRRL 8165 / MA-4680).